The following is a 353-amino-acid chain: Photosystem II D2 protein (353 aa).

N-acetylthreonine is present on threonine 2. At threonine 2 the chain carries Phosphothreonine. The chain crosses the membrane as a helical span at residues 41–61 (CAYFALGGWFTGTTFVTSWYT). Histidine 118 provides a ligand contact to chlorophyll a. Residues 125–141 (GFMLRQFELSRSVQLRP) form a helical membrane-spanning segment. Positions 130 and 143 each coordinate pheophytin a. Residues 153 to 166 (VFVSVFLIYPLGQS) traverse the membrane as a helical segment. Histidine 198 lines the chlorophyll a pocket. Residues 208-228 (AALLCAIHGATVENTLFEDGD) form a helical membrane-spanning segment. Positions 215 and 262 each coordinate a plastoquinone. A Fe cation-binding site is contributed by histidine 215. Fe cation is bound at residue histidine 269. A helical membrane pass occupies residues 279-295 (GLWMSALGVVGLALNLR).

Belongs to the reaction center PufL/M/PsbA/D family. In terms of assembly, PSII is composed of 1 copy each of membrane proteins PsbA, PsbB, PsbC, PsbD, PsbE, PsbF, PsbH, PsbI, PsbJ, PsbK, PsbL, PsbM, PsbT, PsbX, PsbY, PsbZ, Psb30/Ycf12, at least 3 peripheral proteins of the oxygen-evolving complex and a large number of cofactors. It forms dimeric complexes. It depends on The D1/D2 heterodimer binds P680, chlorophylls that are the primary electron donor of PSII, and subsequent electron acceptors. It shares a non-heme iron and each subunit binds pheophytin, quinone, additional chlorophylls, carotenoids and lipids. There is also a Cl(-1) ion associated with D1 and D2, which is required for oxygen evolution. The PSII complex binds additional chlorophylls, carotenoids and specific lipids. as a cofactor.

The protein localises to the plastid. It localises to the chloroplast thylakoid membrane. It carries out the reaction 2 a plastoquinone + 4 hnu + 2 H2O = 2 a plastoquinol + O2. Functionally, photosystem II (PSII) is a light-driven water:plastoquinone oxidoreductase that uses light energy to abstract electrons from H(2)O, generating O(2) and a proton gradient subsequently used for ATP formation. It consists of a core antenna complex that captures photons, and an electron transfer chain that converts photonic excitation into a charge separation. The D1/D2 (PsbA/PsbD) reaction center heterodimer binds P680, the primary electron donor of PSII as well as several subsequent electron acceptors. D2 is needed for assembly of a stable PSII complex. This is Photosystem II D2 protein from Arabis hirsuta (Hairy rock-cress).